Consider the following 217-residue polypeptide: MSAVQRRLPVYKKILEENKKKWMIKEFLEYKLSKYGYIDSEILKTPLGTRIVIYAERPSRIIGKKGVIVKEISNILVNKLGVENPQIDVIDVSKIEAPEMFPKVIAYRIANAMAKGVRFRRVMFVAVRQLMEAGAKGFEIVVSGKLSTERARFEKLTYGKLYKIGYDAKNRVRRAVVHVLLKPGIYGIEVRIAPASLQYSDEYKIKPPVKPETTSQQ.

A KH type-2 domain is found at 24–93 (IKEFLEYKLS…NPQIDVIDVS (70 aa)).

This sequence belongs to the universal ribosomal protein uS3 family. As to quaternary structure, part of the 30S ribosomal subunit.

Binds the lower part of the 30S subunit head. In Pyrobaculum islandicum (strain DSM 4184 / JCM 9189 / GEO3), this protein is Small ribosomal subunit protein uS3.